The primary structure comprises 317 residues: Pseudouridine-5'-phosphate glycosidase (317 aa).

Residue Glu27 is the Proton donor of the active site. Residues Lys89 and Val109 each contribute to the substrate site. Mn(2+) is bound at residue Asp141. 143-145 serves as a coordination point for substrate; that stretch reads SAD. Residue Lys162 is the Nucleophile of the active site.

The protein belongs to the pseudouridine-5'-phosphate glycosidase family. As to quaternary structure, homotrimer. It depends on Mn(2+) as a cofactor.

It carries out the reaction D-ribose 5-phosphate + uracil = psi-UMP + H2O. Its function is as follows. Catalyzes the reversible cleavage of pseudouridine 5'-phosphate (PsiMP) to ribose 5-phosphate and uracil. Functions biologically in the cleavage direction, as part of a pseudouridine degradation pathway. The protein is Pseudouridine-5'-phosphate glycosidase of Sorangium cellulosum (strain So ce56) (Polyangium cellulosum (strain So ce56)).